Here is a 1241-residue protein sequence, read N- to C-terminus: DNA-directed RNA polymerase subunit beta (1241 aa).

The tract at residues 1201–1224 (AEEEQDTDVDYITEDDFESPDPEI) is disordered.

The protein belongs to the RNA polymerase beta chain family. In terms of assembly, the RNAP catalytic core consists of 2 alpha, 1 beta, 1 beta' and 1 omega subunit. When a sigma factor is associated with the core the holoenzyme is formed, which can initiate transcription.

It catalyses the reaction RNA(n) + a ribonucleoside 5'-triphosphate = RNA(n+1) + diphosphate. In terms of biological role, DNA-dependent RNA polymerase catalyzes the transcription of DNA into RNA using the four ribonucleoside triphosphates as substrates. This is DNA-directed RNA polymerase subunit beta from Alkaliphilus oremlandii (strain OhILAs) (Clostridium oremlandii (strain OhILAs)).